The following is a 279-amino-acid chain: Alcohol dehydrogenase-related 31 kDa protein (279 aa).

An NAD(+)-binding site is contributed by 11–34 (YVADCGGIALETSKVLMTKNIAKL). Residue S139 coordinates substrate. The active-site Proton acceptor is the Y152.

The protein belongs to the short-chain dehydrogenases/reductases (SDR) family.

The sequence is that of Alcohol dehydrogenase-related 31 kDa protein (Adhr) from Drosophila guanche (Fruit fly).